The primary structure comprises 328 residues: Biotin synthase (328 aa).

In terms of domain architecture, Radical SAM core spans 48 to 275; it reads NRIQLSKLLN…KSHVRLTAGR (228 aa). Positions 63, 67, and 70 each coordinate [4Fe-4S] cluster. Residues C107, C138, C198, and R270 each coordinate [2Fe-2S] cluster.

The protein belongs to the radical SAM superfamily. Biotin synthase family. As to quaternary structure, homodimer. The cofactor is [4Fe-4S] cluster. [2Fe-2S] cluster serves as cofactor.

It carries out the reaction (4R,5S)-dethiobiotin + (sulfur carrier)-SH + 2 reduced [2Fe-2S]-[ferredoxin] + 2 S-adenosyl-L-methionine = (sulfur carrier)-H + biotin + 2 5'-deoxyadenosine + 2 L-methionine + 2 oxidized [2Fe-2S]-[ferredoxin]. The protein operates within cofactor biosynthesis; biotin biosynthesis; biotin from 7,8-diaminononanoate: step 2/2. Functionally, catalyzes the conversion of dethiobiotin (DTB) to biotin by the insertion of a sulfur atom into dethiobiotin via a radical-based mechanism. The chain is Biotin synthase from Brucella ovis (strain ATCC 25840 / 63/290 / NCTC 10512).